We begin with the raw amino-acid sequence, 172 residues long: Ribosome maturation factor RimM (172 aa).

Residues 95-168 (AEGEFYYHQI…RVDVEIMEGL (74 aa)) form the PRC barrel domain.

This sequence belongs to the RimM family. As to quaternary structure, binds ribosomal protein uS19.

It is found in the cytoplasm. Its function is as follows. An accessory protein needed during the final step in the assembly of 30S ribosomal subunit, possibly for assembly of the head region. Essential for efficient processing of 16S rRNA. May be needed both before and after RbfA during the maturation of 16S rRNA. It has affinity for free ribosomal 30S subunits but not for 70S ribosomes. This is Ribosome maturation factor RimM from Streptococcus equi subsp. equi (strain 4047).